Consider the following 486-residue polypeptide: MSTNVADLLHTIKNNWCDRSILVVGDVMLDQYIWGDVGRISPEAPVPIVRATHRTEQPGGAANVALNIARLGARATIVGFTGTDDNERALKDYLSSNRVEADFVSCEGFPTITKLRILSGRQQMLRLDNERAESRPSTAYQKLIERALHHLPQSDALILSDYAKGVLLPEVCQTLIQAAAQRKIPVLVDPKNVDFSRYRGATTISPNLGELALAARVDLENLNDLLYAAQQMVRNLGLSFLTATLGEKGIALVTRDKTTISAAVARQVFDVSGAGDAVIATLSLSLASGLDPELGVHLANLAGAIVVSKVGTAPVEQYELLNALTAESVPVAQAKVVTRSELLELVARWRRNDERIVVTNGCFDLLHVGHISLLEQARGFGDRLVVAINSDRSVRELKGNSRPIVGEQERARVLAAIAAVDAVVIFDERTPLELIEATRPDVLVKGGDYAVSGVVGAEEVQSWGGHVKIVPIVEGFSTTKLIEKGH.

Positions 1–331 (MSTNVADLLH…NALTAESVPV (331 aa)) are ribokinase. 207–210 (NLGE) provides a ligand contact to ATP. The active site involves aspartate 276. Residues 358–486 (VTNGCFDLLH…STTKLIEKGH (129 aa)) form a cytidylyltransferase region.

It in the N-terminal section; belongs to the carbohydrate kinase PfkB family. This sequence in the C-terminal section; belongs to the cytidylyltransferase family. Homodimer.

The enzyme catalyses D-glycero-beta-D-manno-heptose 7-phosphate + ATP = D-glycero-beta-D-manno-heptose 1,7-bisphosphate + ADP + H(+). It carries out the reaction D-glycero-beta-D-manno-heptose 1-phosphate + ATP + H(+) = ADP-D-glycero-beta-D-manno-heptose + diphosphate. It participates in nucleotide-sugar biosynthesis; ADP-L-glycero-beta-D-manno-heptose biosynthesis; ADP-L-glycero-beta-D-manno-heptose from D-glycero-beta-D-manno-heptose 7-phosphate: step 1/4. Its pathway is nucleotide-sugar biosynthesis; ADP-L-glycero-beta-D-manno-heptose biosynthesis; ADP-L-glycero-beta-D-manno-heptose from D-glycero-beta-D-manno-heptose 7-phosphate: step 3/4. Catalyzes the phosphorylation of D-glycero-D-manno-heptose 7-phosphate at the C-1 position to selectively form D-glycero-beta-D-manno-heptose-1,7-bisphosphate. In terms of biological role, catalyzes the ADP transfer from ATP to D-glycero-beta-D-manno-heptose 1-phosphate, yielding ADP-D-glycero-beta-D-manno-heptose. This is Bifunctional protein HldE from Koribacter versatilis (strain Ellin345).